A 189-amino-acid polypeptide reads, in one-letter code: Elongation factor P-like protein (189 aa).

The protein belongs to the elongation factor P family.

This chain is Elongation factor P-like protein, found in Vibrio atlanticus (strain LGP32) (Vibrio splendidus (strain Mel32)).